The primary structure comprises 498 residues: Probable cytosol aminopeptidase (498 aa).

Residues K264 and D269 each coordinate Mn(2+). K276 is a catalytic residue. The Mn(2+) site is built by D287, D346, and E348. R350 is an active-site residue.

It belongs to the peptidase M17 family. The cofactor is Mn(2+).

It localises to the cytoplasm. It catalyses the reaction Release of an N-terminal amino acid, Xaa-|-Yaa-, in which Xaa is preferably Leu, but may be other amino acids including Pro although not Arg or Lys, and Yaa may be Pro. Amino acid amides and methyl esters are also readily hydrolyzed, but rates on arylamides are exceedingly low.. The catalysed reaction is Release of an N-terminal amino acid, preferentially leucine, but not glutamic or aspartic acids.. Functionally, presumably involved in the processing and regular turnover of intracellular proteins. Catalyzes the removal of unsubstituted N-terminal amino acids from various peptides. This chain is Probable cytosol aminopeptidase, found in Rhizobium rhizogenes (strain K84 / ATCC BAA-868) (Agrobacterium radiobacter).